The following is a 300-amino-acid chain: Protein SPEAR4 (300 aa).

Polar residues predominate over residues 1 to 10 (MCSKTSSVSY). The tract at residues 1–45 (MCSKTSSVSYGNREDDDNYSSLCPKKQKHNNGGKKRVPRRGPGVA) is disordered. Over residues 25–39 (KKQKHNNGGKKRVPR) the composition is skewed to basic residues. The SPL signature appears at 40-48 (RGPGVAELE). The EAR signature appears at 294-300 (IDLRLKL).

Interacts with SPL and SPEAR2. Expressed in leaves.

Functionally, adapter-like transcriptional repressor recruiting TPL/TPR coepressors to inhibit TCP transcription factors. May be involved in leaf development. The sequence is that of Protein SPEAR4 from Arabidopsis thaliana (Mouse-ear cress).